The sequence spans 332 residues: 4-hydroxy-3-methylbut-2-enyl diphosphate reductase (332 aa).

A [4Fe-4S] cluster-binding site is contributed by C34. 2 residues coordinate (2E)-4-hydroxy-3-methylbut-2-enyl diphosphate: H63 and H96. H63 and H96 together coordinate dimethylallyl diphosphate. 2 residues coordinate isopentenyl diphosphate: H63 and H96. Residue C118 participates in [4Fe-4S] cluster binding. H146 is a binding site for (2E)-4-hydroxy-3-methylbut-2-enyl diphosphate. H146 contributes to the dimethylallyl diphosphate binding site. An isopentenyl diphosphate-binding site is contributed by H146. The active-site Proton donor is E148. T186 contributes to the (2E)-4-hydroxy-3-methylbut-2-enyl diphosphate binding site. C216 serves as a coordination point for [4Fe-4S] cluster. 4 residues coordinate (2E)-4-hydroxy-3-methylbut-2-enyl diphosphate: S244, S245, N246, and S289. Dimethylallyl diphosphate-binding residues include S244, S245, N246, and S289. The isopentenyl diphosphate site is built by S244, S245, N246, and S289.

This sequence belongs to the IspH family. [4Fe-4S] cluster is required as a cofactor.

The catalysed reaction is isopentenyl diphosphate + 2 oxidized [2Fe-2S]-[ferredoxin] + H2O = (2E)-4-hydroxy-3-methylbut-2-enyl diphosphate + 2 reduced [2Fe-2S]-[ferredoxin] + 2 H(+). It catalyses the reaction dimethylallyl diphosphate + 2 oxidized [2Fe-2S]-[ferredoxin] + H2O = (2E)-4-hydroxy-3-methylbut-2-enyl diphosphate + 2 reduced [2Fe-2S]-[ferredoxin] + 2 H(+). Its pathway is isoprenoid biosynthesis; dimethylallyl diphosphate biosynthesis; dimethylallyl diphosphate from (2E)-4-hydroxy-3-methylbutenyl diphosphate: step 1/1. It functions in the pathway isoprenoid biosynthesis; isopentenyl diphosphate biosynthesis via DXP pathway; isopentenyl diphosphate from 1-deoxy-D-xylulose 5-phosphate: step 6/6. Catalyzes the conversion of 1-hydroxy-2-methyl-2-(E)-butenyl 4-diphosphate (HMBPP) into a mixture of isopentenyl diphosphate (IPP) and dimethylallyl diphosphate (DMAPP). Acts in the terminal step of the DOXP/MEP pathway for isoprenoid precursor biosynthesis. This is 4-hydroxy-3-methylbut-2-enyl diphosphate reductase from Mycobacterium leprae (strain TN).